Here is a 472-residue protein sequence, read N- to C-terminus: Ribulose bisphosphate carboxylase large chain (472 aa).

Positions 120 and 170 each coordinate substrate. Lysine 172 serves as the catalytic Proton acceptor. Lysine 174 serves as a coordination point for substrate. Mg(2+)-binding residues include lysine 198, aspartate 200, and glutamate 201. Lysine 198 bears the N6-carboxylysine mark. The Proton acceptor role is filled by histidine 291. Substrate-binding residues include arginine 292, histidine 324, and serine 376.

It belongs to the RuBisCO large chain family. Type I subfamily. As to quaternary structure, heterohexadecamer of 8 large chains and 8 small chains. It depends on Mg(2+) as a cofactor.

It localises to the carboxysome. It carries out the reaction 2 (2R)-3-phosphoglycerate + 2 H(+) = D-ribulose 1,5-bisphosphate + CO2 + H2O. The enzyme catalyses D-ribulose 1,5-bisphosphate + O2 = 2-phosphoglycolate + (2R)-3-phosphoglycerate + 2 H(+). Functionally, ruBisCO catalyzes two reactions: the carboxylation of D-ribulose 1,5-bisphosphate, the primary event in carbon dioxide fixation, as well as the oxidative fragmentation of the pentose substrate in the photorespiration process. Both reactions occur simultaneously and in competition at the same active site. The sequence is that of Ribulose bisphosphate carboxylase large chain from Gloeothece citriformis (strain PCC 7424) (Cyanothece sp. (strain PCC 7424)).